A 172-amino-acid polypeptide reads, in one-letter code: Translation initiation factor IF-3 (172 aa).

Belongs to the IF-3 family. As to quaternary structure, monomer.

The protein localises to the cytoplasm. Functionally, IF-3 binds to the 30S ribosomal subunit and shifts the equilibrium between 70S ribosomes and their 50S and 30S subunits in favor of the free subunits, thus enhancing the availability of 30S subunits on which protein synthesis initiation begins. The chain is Translation initiation factor IF-3 from Haemophilus influenzae (strain ATCC 51907 / DSM 11121 / KW20 / Rd).